Consider the following 487-residue polypeptide: GTPase Der (487 aa).

EngA-type G domains follow at residues 3–166 (PVIA…IAEL) and 201–374 (VKLA…ESAT). GTP is bound by residues 9 to 16 (GRPNVGKS), 56 to 60 (DTGGI), 118 to 121 (NKTD), 207 to 214 (GRPNVGKS), 254 to 258 (DTAGV), and 319 to 322 (NKWD). The KH-like domain occupies 375 to 459 (KRISTAMLRR…PIKIEFREGD (85 aa)).

This sequence belongs to the TRAFAC class TrmE-Era-EngA-EngB-Septin-like GTPase superfamily. EngA (Der) GTPase family. Associates with the 50S ribosomal subunit.

In terms of biological role, GTPase that plays an essential role in the late steps of ribosome biogenesis. The chain is GTPase Der from Pseudoalteromonas translucida (strain TAC 125).